A 127-amino-acid chain; its full sequence is NADPH-dependent 7-cyano-7-deazaguanine reductase (127 aa).

The Thioimide intermediate role is filled by cysteine 40. Catalysis depends on aspartate 47, which acts as the Proton donor. Substrate is bound by residues valine 62–leucine 64 and histidine 81–glutamate 82.

The protein belongs to the GTP cyclohydrolase I family. QueF type 1 subfamily.

The protein localises to the cytoplasm. It catalyses the reaction 7-aminomethyl-7-carbaguanine + 2 NADP(+) = 7-cyano-7-deazaguanine + 2 NADPH + 3 H(+). The protein operates within tRNA modification; tRNA-queuosine biosynthesis. In terms of biological role, catalyzes the NADPH-dependent reduction of 7-cyano-7-deazaguanine (preQ0) to 7-aminomethyl-7-deazaguanine (preQ1). The protein is NADPH-dependent 7-cyano-7-deazaguanine reductase of Campylobacter jejuni subsp. jejuni serotype O:6 (strain 81116 / NCTC 11828).